Here is a 185-residue protein sequence, read N- to C-terminus: Shikimate kinase (185 aa).

21–26 lines the ATP pocket; sequence GVGKTT. Residue Thr-25 coordinates Mg(2+). Residues Asp-43, Arg-67, and Gly-90 each coordinate substrate. Residue Arg-129 participates in ATP binding. A substrate-binding site is contributed by Arg-147.

It belongs to the shikimate kinase family. In terms of assembly, monomer. Mg(2+) serves as cofactor.

The protein resides in the cytoplasm. The catalysed reaction is shikimate + ATP = 3-phosphoshikimate + ADP + H(+). It functions in the pathway metabolic intermediate biosynthesis; chorismate biosynthesis; chorismate from D-erythrose 4-phosphate and phosphoenolpyruvate: step 5/7. In terms of biological role, catalyzes the specific phosphorylation of the 3-hydroxyl group of shikimic acid using ATP as a cosubstrate. The chain is Shikimate kinase from Bacillus pumilus (strain SAFR-032).